The sequence spans 449 residues: tRNA modification GTPase MnmE (449 aa).

The (6S)-5-formyl-5,6,7,8-tetrahydrofolate site is built by R24, E81, and K121. The TrmE-type G domain occupies 218 to 375 (GLVVAITGPP…LIAALGKFAA (158 aa)). Residues 228–233 (NVGKST), 247–253 (SPHAGTT), and 272–275 (DTAG) each bind GTP. Mg(2+) is bound by residues S232 and T253. (6S)-5-formyl-5,6,7,8-tetrahydrofolate is bound at residue K449.

It belongs to the TRAFAC class TrmE-Era-EngA-EngB-Septin-like GTPase superfamily. TrmE GTPase family. As to quaternary structure, homodimer. Heterotetramer of two MnmE and two MnmG subunits. It depends on K(+) as a cofactor.

The protein localises to the cytoplasm. Its function is as follows. Exhibits a very high intrinsic GTPase hydrolysis rate. Involved in the addition of a carboxymethylaminomethyl (cmnm) group at the wobble position (U34) of certain tRNAs, forming tRNA-cmnm(5)s(2)U34. The sequence is that of tRNA modification GTPase MnmE from Rhodopseudomonas palustris (strain BisB18).